The primary structure comprises 315 residues: 7,8-didemethyl-8-hydroxy-5-deazariboflavin synthase (315 aa).

Residues I6–N237 enclose the Radical SAM core domain. Positions 20, 24, and 27 each coordinate [4Fe-4S] cluster.

Belongs to the radical SAM superfamily. CofG family. In terms of assembly, consists of two subunits, CofG and CofH. The cofactor is [4Fe-4S] cluster.

It catalyses the reaction 5-amino-5-(4-hydroxybenzyl)-6-(D-ribitylimino)-5,6-dihydrouracil + S-adenosyl-L-methionine = 7,8-didemethyl-8-hydroxy-5-deazariboflavin + 5'-deoxyadenosine + L-methionine + NH4(+) + H(+). It functions in the pathway cofactor biosynthesis; coenzyme F0 biosynthesis. Functionally, catalyzes the radical-mediated synthesis of 7,8-didemethyl-8-hydroxy-5-deazariboflavin from 5-amino-5-(4-hydroxybenzyl)-6-(D-ribitylimino)-5,6-dihydrouracil. The protein is 7,8-didemethyl-8-hydroxy-5-deazariboflavin synthase of Thermosynechococcus vestitus (strain NIES-2133 / IAM M-273 / BP-1).